A 332-amino-acid polypeptide reads, in one-letter code: Holliday junction branch migration complex subunit RuvB (332 aa).

Positions 1–181 are large ATPase domain (RuvB-L); that stretch reads MSRILDNEIM…FGITGHMEYY (181 aa). Residues leucine 20, arginine 21, glycine 62, lysine 65, threonine 66, threonine 67, 128–130, arginine 171, tyrosine 181, and arginine 218 each bind ATP; that span reads EDF. Threonine 66 serves as a coordination point for Mg(2+). The small ATPAse domain (RuvB-S) stretch occupies residues 182–252; sequence AHADLTEIVE…ITDKALTMLD (71 aa). A head domain (RuvB-H) region spans residues 255 to 332; it reads HEGLDYVDQK…EHLGYEYSEK (78 aa). Positions 291, 310, 312, and 315 each coordinate DNA.

The protein belongs to the RuvB family. Homohexamer. Forms an RuvA(8)-RuvB(12)-Holliday junction (HJ) complex. HJ DNA is sandwiched between 2 RuvA tetramers; dsDNA enters through RuvA and exits via RuvB. An RuvB hexamer assembles on each DNA strand where it exits the tetramer. Each RuvB hexamer is contacted by two RuvA subunits (via domain III) on 2 adjacent RuvB subunits; this complex drives branch migration. In the full resolvosome a probable DNA-RuvA(4)-RuvB(12)-RuvC(2) complex forms which resolves the HJ.

The protein resides in the cytoplasm. It carries out the reaction ATP + H2O = ADP + phosphate + H(+). The RuvA-RuvB-RuvC complex processes Holliday junction (HJ) DNA during genetic recombination and DNA repair, while the RuvA-RuvB complex plays an important role in the rescue of blocked DNA replication forks via replication fork reversal (RFR). RuvA specifically binds to HJ cruciform DNA, conferring on it an open structure. The RuvB hexamer acts as an ATP-dependent pump, pulling dsDNA into and through the RuvAB complex. RuvB forms 2 homohexamers on either side of HJ DNA bound by 1 or 2 RuvA tetramers; 4 subunits per hexamer contact DNA at a time. Coordinated motions by a converter formed by DNA-disengaged RuvB subunits stimulates ATP hydrolysis and nucleotide exchange. Immobilization of the converter enables RuvB to convert the ATP-contained energy into a lever motion, pulling 2 nucleotides of DNA out of the RuvA tetramer per ATP hydrolyzed, thus driving DNA branch migration. The RuvB motors rotate together with the DNA substrate, which together with the progressing nucleotide cycle form the mechanistic basis for DNA recombination by continuous HJ branch migration. Branch migration allows RuvC to scan DNA until it finds its consensus sequence, where it cleaves and resolves cruciform DNA. This Streptococcus pneumoniae serotype 2 (strain D39 / NCTC 7466) protein is Holliday junction branch migration complex subunit RuvB.